The primary structure comprises 332 residues: 2,3-diketo-L-gulonate reductase (332 aa).

Catalysis depends on histidine 44, which acts as the Proton donor. NAD(+)-binding positions include 168–174 (ITMVDMS), 224–225 (WK), and 304–306 (GHE).

This sequence belongs to the LDH2/MDH2 oxidoreductase family. DlgD subfamily. In terms of assembly, homodimer.

It is found in the cytoplasm. It catalyses the reaction 3-dehydro-L-gulonate + NAD(+) = 2,3-dioxo-L-gulonate + NADH + H(+). The catalysed reaction is 3-dehydro-L-gulonate + NADP(+) = 2,3-dioxo-L-gulonate + NADPH + H(+). Catalyzes the reduction of 2,3-diketo-L-gulonate in the presence of NADH, to form 3-keto-L-gulonate. The polypeptide is 2,3-diketo-L-gulonate reductase (Klebsiella oxytoca).